A 474-amino-acid polypeptide reads, in one-letter code: Na(+)/H(+) antiporter NhaA 3 (474 aa).

The next 11 membrane-spanning stretches (helical) occupy residues 31–51, 73–93, 110–130, 141–161, 171–191, 194–214, 220–240, 280–300, 309–329, 347–367, and 378–398; these read VGGVLLLVAAIAALVWANIPA, LSVAHWAADGLLAIFFFVAGI, AALPVVAALCGMVVPAVVYTV, GWAVPTATDIAFALAVLAVIG, FLLTLAVVDDLFAILIIAVFF, TLNFAALGGAVVGLAVFWLLL, GWYVYVPLGLVIWALMYNSGV, LAVPLFALFSAGVAITGGALA, LGVVLGLVVGKTLGIFGGTWL, VFAVATLAGIGFTVSLLIGEL, and EVKAAVLTGSLIAAALATVLL.

Belongs to the NhaA Na(+)/H(+) (TC 2.A.33) antiporter family.

Its subcellular location is the cell membrane. It carries out the reaction Na(+)(in) + 2 H(+)(out) = Na(+)(out) + 2 H(+)(in). Na(+)/H(+) antiporter that extrudes sodium in exchange for external protons. This Streptomyces coelicolor (strain ATCC BAA-471 / A3(2) / M145) protein is Na(+)/H(+) antiporter NhaA 3.